Reading from the N-terminus, the 364-residue chain is UDP-N-acetylglucosamine--N-acetylmuramyl-(pentapeptide) pyrophosphoryl-undecaprenol N-acetylglucosamine transferase (364 aa).

UDP-N-acetyl-alpha-D-glucosamine contacts are provided by residues 10–12 (TGG), N124, R166, S196, I252, and Q297.

This sequence belongs to the glycosyltransferase 28 family. MurG subfamily.

It is found in the cell membrane. It carries out the reaction di-trans,octa-cis-undecaprenyl diphospho-N-acetyl-alpha-D-muramoyl-L-alanyl-D-glutamyl-meso-2,6-diaminopimeloyl-D-alanyl-D-alanine + UDP-N-acetyl-alpha-D-glucosamine = di-trans,octa-cis-undecaprenyl diphospho-[N-acetyl-alpha-D-glucosaminyl-(1-&gt;4)]-N-acetyl-alpha-D-muramoyl-L-alanyl-D-glutamyl-meso-2,6-diaminopimeloyl-D-alanyl-D-alanine + UDP + H(+). The protein operates within cell wall biogenesis; peptidoglycan biosynthesis. In terms of biological role, cell wall formation. Catalyzes the transfer of a GlcNAc subunit on undecaprenyl-pyrophosphoryl-MurNAc-pentapeptide (lipid intermediate I) to form undecaprenyl-pyrophosphoryl-MurNAc-(pentapeptide)GlcNAc (lipid intermediate II). This is UDP-N-acetylglucosamine--N-acetylmuramyl-(pentapeptide) pyrophosphoryl-undecaprenol N-acetylglucosamine transferase from Ruminiclostridium cellulolyticum (strain ATCC 35319 / DSM 5812 / JCM 6584 / H10) (Clostridium cellulolyticum).